The chain runs to 546 residues: (-)-5-epieremophilene synthase STPS2 (546 aa).

Positions 299, 303, 442, 446, and 450 each coordinate Mg(2+). A DDXXD motif motif is present at residues 299–303 (DDTYD).

This sequence belongs to the terpene synthase family. Tpsa subfamily. As to quaternary structure, monomer. The cofactor is Mg(2+). In terms of tissue distribution, highly expressed in leaves. Expressed at levels in flowers.

The enzyme catalyses (2E,6E)-farnesyl diphosphate = (-)-5-epi-eremophilene + diphosphate. It participates in secondary metabolite biosynthesis; terpenoid biosynthesis. Sesquiterpene synthase that catalyzes the conversion of farnesyl diphosphate to (-)-5-epi-eremophilene. This chain is (-)-5-epieremophilene synthase STPS2, found in Salvia miltiorrhiza (Chinese sage).